Here is a 379-residue protein sequence, read N- to C-terminus: F-box protein At1g67340 (379 aa).

One can recognise an F-box domain in the interval 41–92 (ADLLDSIPDDLVISILCKLGSTSRCPADFINVLLTCKRLKGLAMNPIVLSRL). His-304, Cys-307, Cys-320, Cys-323, Cys-329, Cys-333, His-342, and Cys-346 together coordinate Zn(2+). The MYND-type; atypical zinc-finger motif lies at 304-346 (HAGCGRPETRKHEFRRCSVCGVVNYCSRACQALDWKLRHKMDC). The segment at 358 to 379 (GGEGNVQIDGNGNGDNVLLPMS) is disordered.

Part of a SCF (ASK-cullin-F-box) protein ligase complex. Interacts with SKP1A/ASK1, SKP1B/ASK2, ASK4, ASK11 and ASK13.

It localises to the nucleus. It functions in the pathway protein modification; protein ubiquitination. Its function is as follows. Component of SCF(ASK-cullin-F-box) E3 ubiquitin ligase complexes, which may mediate the ubiquitination and subsequent proteasomal degradation of target proteins. This is F-box protein At1g67340 from Arabidopsis thaliana (Mouse-ear cress).